The chain runs to 194 residues: Thymidine kinase (194 aa).

ATP-binding positions include 9–16 and 85–88; these read GAMNSGKT and DECQ. E86 functions as the Proton acceptor in the catalytic mechanism. Positions 143, 146, 180, and 183 each coordinate Zn(2+).

Belongs to the thymidine kinase family. In terms of assembly, homotetramer.

It localises to the cytoplasm. It carries out the reaction thymidine + ATP = dTMP + ADP + H(+). The protein is Thymidine kinase of Enterococcus faecalis (strain ATCC 700802 / V583).